Reading from the N-terminus, the 140-residue chain is ATP synthase epsilon chain (140 aa).

It belongs to the ATPase epsilon chain family. In terms of assembly, F-type ATPases have 2 components, CF(1) - the catalytic core - and CF(0) - the membrane proton channel. CF(1) has five subunits: alpha(3), beta(3), gamma(1), delta(1), epsilon(1). CF(0) has three main subunits: a, b and c.

The protein localises to the cell inner membrane. Produces ATP from ADP in the presence of a proton gradient across the membrane. The sequence is that of ATP synthase epsilon chain from Vibrio parahaemolyticus serotype O3:K6 (strain RIMD 2210633).